A 482-amino-acid chain; its full sequence is 7-deoxyloganetic acid glucosyltransferase (482 aa).

H22 serves as the catalytic Proton acceptor. An an anthocyanidin-binding site is contributed by H22. D127 acts as the Charge relay in catalysis. UDP-alpha-D-glucose is bound by residues T149, A362, Q364, H379, W382, N383, S384, and E387. Residue A402 participates in an anthocyanidin binding. D403 and Q404 together coordinate UDP-alpha-D-glucose.

It belongs to the UDP-glycosyltransferase family. Expressed in leaves, roots and stems. Lower levels of expression in flowers. Preferentially expressed in internal phloem parenchyma cells.

The catalysed reaction is 7-deoxyloganetate + UDP-alpha-D-glucose = 7-deoxyloganate + UDP + H(+). Its function is as follows. Iridoid glucosyltransferase acting exclusively on 7-deoxyloganetic acid. No activity with 7-deoxyloganetin. Catalyzes the fourth to last step in secologanin biosynthesis. The protein is 7-deoxyloganetic acid glucosyltransferase (UGT709C2) of Catharanthus roseus (Madagascar periwinkle).